The primary structure comprises 114 residues: Pro-FMRFamide-related neuropeptide FF (114 aa).

The first 21 residues, Met-1–Thr-21, serve as a signal peptide directing secretion. A propeptide spanning residues Glu-22–Pro-69 is cleaved from the precursor. Phe-82 is modified (phenylalanine amide). The propeptide occupies Ser-85 to Arg-100. Phenylalanine amide is present on Phe-111.

It belongs to the FARP (FMRFamide related peptide) family.

It localises to the secreted. In terms of biological role, morphine modulating peptides. Have wide-ranging physiologic effects, including the modulation of morphine-induced analgesia, elevation of arterial blood pressure, and increased somatostatin secretion from the pancreas. Neuropeptide FF potentiates and sensitizes ASIC1 and ASIC3 channels. The sequence is that of Pro-FMRFamide-related neuropeptide FF (Npff) from Mus musculus (Mouse).